Reading from the N-terminus, the 46-residue chain is Thymosin beta-a (46 aa).

Residues threonine 21–proline 30 are compositionally biased toward polar residues. A disordered region spans residues threonine 21 to lysine 46. Residues threonine 31–lysine 46 are compositionally biased toward basic and acidic residues.

This sequence belongs to the thymosin beta family.

It localises to the cytoplasm. It is found in the cytoskeleton. Functionally, plays an important role in the organization of the cytoskeleton. Binds to and sequesters actin monomers (G actin) and therefore inhibits actin polymerization. This Cyprinus carpio (Common carp) protein is Thymosin beta-a.